The sequence spans 105 residues: Nucleoid-associated protein cu1912 (105 aa).

This sequence belongs to the YbaB/EbfC family. Homodimer.

Its subcellular location is the cytoplasm. The protein localises to the nucleoid. In terms of biological role, binds to DNA and alters its conformation. May be involved in regulation of gene expression, nucleoid organization and DNA protection. The protein is Nucleoid-associated protein cu1912 of Corynebacterium urealyticum (strain ATCC 43042 / DSM 7109).